An 86-amino-acid chain; its full sequence is Probable weak neurotoxin NNAM3 (86 aa).

The signal sequence occupies residues methionine 1–threonine 21. Cystine bridges form between cysteine 24/cysteine 45, cysteine 27/cysteine 32, cysteine 38/cysteine 63, cysteine 67/cysteine 78, and cysteine 79/cysteine 84.

This sequence belongs to the three-finger toxin family. Ancestral subfamily. Orphan group II sub-subfamily. As to expression, expressed by the venom gland.

It is found in the secreted. In terms of biological role, binds with low affinity to muscular (alpha-1-beta-1-delta-epsilon/CHRNA1-CHRNB1-CHRND-CHRNE) and very low affinity to neuronal (alpha-7/CHRNA7) nicotinic acetylcholine receptor (nAChR). This is Probable weak neurotoxin NNAM3 from Naja atra (Chinese cobra).